A 329-amino-acid polypeptide reads, in one-letter code: MPISTKSSFYLPAVDISPYLQDPNSDAARKVIDDVRAACTSTGFFQLLGHGISPALQQSVFAAAAKFFALPSDVKSRCRNVGFRGYDPMASQSYELGVLPDLKEGFIAGKDIPLDDPRVASQRFFMGQNAWPPSELLPEANFRRPIEEYYQAMLKLCWVVLDLVAATLPYGPHVFDEFKENDPACPLRLLHYPPAPAPDVAKGRQLGSSAHTDFGAITLLLQDDHSGLEVQDCETGEWIGVPPNKDAYVVNLGDMMSRITRGHYKSSIHRVINQNLTDRYSVVFFFDGNLDYRLRPLDRVGQNWDEEDTLTVEEHMLERTTTTYNLKVK.

Residues 183–288 (PACPLRLLHY…RYSVVFFFDG (106 aa)) enclose the Fe2OG dioxygenase domain. Fe cation is bound by residues histidine 211, aspartate 213, and histidine 269. Arginine 279 lines the 2-oxoglutarate pocket.

It belongs to the iron/ascorbate-dependent oxidoreductase family. Requires Fe(2+) as cofactor.

The protein operates within mycotoxin biosynthesis. Its function is as follows. 2-oxoglutarate-dependent dioxygenase; part of the gene cluster that mediates the biosynthesis of the mycotoxin citrinin, a hepato-nephrotoxic compound to humans due to inhibition of respiration complex III. The pathway begins with the synthesis of a keto-aldehyde intermediate by the citrinin PKS (pksCT) from successive condensations of 4 malonyl-CoA units, presumably with a simple acetyl-CoA starter unit. Release of the keto-aldehyde intermediate is consistent with the presence of the C-terminal reductive release domain. Mp11 collaborates with pksCT by catalyzing the hydrolysis of ACP-bound acyl intermediates to free the ACP from stalled intermediates. Mpl2 then catalyzes the oxidation of the C-12 methyl of the ketone intermediate to an alcohol intermediate which is further oxidized by the oxidoreductase mpl7 to produce a bisaldehyde intermediate. The fourth catalytic step is catalyzed by the mpl4 aldehyde dehydrogenase. The final transformation is the reduction of C-3 by mpl6 to provide the chemically stable citrinin nucleus. This chain is 2-oxoglutarate-dependent dioxygenase mpl2, found in Monascus purpureus (Red mold).